The primary structure comprises 191 residues: MADGEVHKLRDIIEKELLEARRVFFSEPVTEKSASDAIKKLWYLELKDPGKPIVFVINSPGGSVDAGFAVWDQIKMLTSPVTTVVTGLAASMGSVLSLCAAPGRRFATPHSRIMIHQPSIGGPITGQATDLDIHAREILKTKARIIDVYVEATNQPRDIIEKAIDRDMWMTANEAKDFGLLDGILFSFNDL.

The active-site Nucleophile is Ser91. His116 is a catalytic residue.

It belongs to the peptidase S14 family. In terms of assembly, fourteen ClpP subunits assemble into 2 heptameric rings which stack back to back to give a disk-like structure with a central cavity, resembling the structure of eukaryotic proteasomes.

It is found in the cytoplasm. The enzyme catalyses Hydrolysis of proteins to small peptides in the presence of ATP and magnesium. alpha-casein is the usual test substrate. In the absence of ATP, only oligopeptides shorter than five residues are hydrolyzed (such as succinyl-Leu-Tyr-|-NHMec, and Leu-Tyr-Leu-|-Tyr-Trp, in which cleavage of the -Tyr-|-Leu- and -Tyr-|-Trp bonds also occurs).. In terms of biological role, cleaves peptides in various proteins in a process that requires ATP hydrolysis. Has a chymotrypsin-like activity. Plays a major role in the degradation of misfolded proteins. The chain is ATP-dependent Clp protease proteolytic subunit 1 from Chlamydia pneumoniae (Chlamydophila pneumoniae).